The chain runs to 87 residues: Large ribosomal subunit protein bL31B (87 aa).

It belongs to the bacterial ribosomal protein bL31 family. Type B subfamily. In terms of assembly, part of the 50S ribosomal subunit.

The chain is Large ribosomal subunit protein bL31B from Escherichia coli O9:H4 (strain HS).